A 258-amino-acid chain; its full sequence is Tetraspanin-15 (258 aa).

At methionine 1 to tyrosine 20 the chain is on the cytoplasmic side. The helical transmembrane segment at isoleucine 21 to leucine 41 threads the bilayer. Residues leucine 42–arginine 62 lie on the Extracellular side of the membrane. Residues isoleucine 63–phenylalanine 83 traverse the membrane as a helical segment. Over lysine 84–cysteine 93 the chain is Cytoplasmic. The helical transmembrane segment at alanine 94 to phenylalanine 114 threads the bilayer. Residues arginine 115–aspartate 223 lie on the Extracellular side of the membrane. The chain crosses the membrane as a helical span at residues leucine 224–isoleucine 244. Residues proline 245–lysine 258 are Cytoplasmic-facing.

The protein belongs to the tetraspanin (TM4SF) family. Interacts with doxa-1 and bli-3. Expressed in the body wall (hyp7 hypodermal syncitium), pharynx and vulva. Expressed in a punctate pattern along the thick region of the hypodermis.

The protein localises to the membrane. Functionally, plays a role in cuticle biogenesis. In complex with doxa-1 and the dual oxidase bli-3, promotes the generation of reactive oxygen species (ROS) and tyrosine cross-linking of collagen, thus stabilizing cuticular extracellular matrix. In Caenorhabditis elegans, this protein is Tetraspanin-15.